Reading from the N-terminus, the 411-residue chain is Intracellular hyaluronan-binding protein 4 (411 aa).

2 positions are modified to phosphoserine: Ser7 and Ser36. Residues 42-62 adopt a coiled-coil conformation; it reads LREAEHRRQQQLQRKRRDEAA. The disordered stretch occupies residues 42 to 271; that stretch reads LREAEHRRQQ…ECQGTLDEES (230 aa). The residue at position 70 (Arg70) is an Omega-N-methylarginine. Ser74 is modified (phosphoserine). Residues 87–97 are compositionally biased toward basic and acidic residues; the sequence is GRRESQKERKS. At Ser108 the chain carries Phosphoserine. Basic and acidic residues-rich tracts occupy residues 138 to 181 and 205 to 229; these read VLER…DRPL and DSFDQRGKRDFERYSSNDKTNRMED. Glycyl lysine isopeptide (Lys-Gly) (interchain with G-Cter in SUMO1); alternate cross-links involve residues Lys212 and Lys274. Glycyl lysine isopeptide (Lys-Gly) (interchain with G-Cter in SUMO2); alternate cross-links involve residues Lys212 and Lys274. A coiled-coil region spans residues 279–301; that stretch reads EVEEENQVQEMTLDEWKNLQEQT. Residues 296–313 show a composition bias toward basic and acidic residues; it reads NLQEQTRPKPEFNIRKPE. The disordered stretch occupies residues 296–318; it reads NLQEQTRPKPEFNIRKPESTVPS. Residue Lys334 forms a Glycyl lysine isopeptide (Lys-Gly) (interchain with G-Cter in SUMO1); alternate linkage. A Glycyl lysine isopeptide (Lys-Gly) (interchain with G-Cter in SUMO2); alternate cross-link involves residue Lys334. Thr352 and Thr373 each carry phosphothreonine; by PKC. Residues 358-411 form a disordered region; sequence NFGNLPRPGRGARGSTRGGRGRMRRTENYGPRAEVVTQDVAPNPDDPEDFPALA. Residues 402–411 show a composition bias toward acidic residues; that stretch reads DDPEDFPALA.

The protein belongs to the SERBP1-HABP4 family. Associates with ribosomes; promoting ribosome stabilization. Interacts with EEF2/eEF2; promoting ribosome stabilization. Interacts with FMR1. Interacts with FXR1 and FXR2. Interacts with CHD3 (via C-terminus). Interacts (via C-terminus) with RACK1. Interacts with p53/TP53. Interacts (via N-terminus) with SRSF9; this interaction is direct. Interacts with SYNCRIP; this interaction is direct. Interacts with MEF2C (via N-terminus); this interaction decreases DNA-binding activity of MEF2C in myocardial cells in response to mechanical stress. Interacts with PRMT1 (via N-terminus). Interacts with SPIN1. Phosphorylated by phorbol 12-myristate 13-acetate (PMA)-activated PKC isoforms at Thr-352 and Thr-373. Post-translationally, methylated. Methylation is decreased by phorbol 12-myristate 13-acetate (PMA)-activated PKC, in vitro. As to expression, expressed in adult heart, brain, liver, kidney, testis, and in various embryonic tissues, but not in adult spleen, lung or skeletal muscle.

The protein localises to the nucleus. Its subcellular location is the cytoplasm. It is found in the stress granule. It localises to the sarcoplasm. The protein resides in the nuclear body. The protein localises to the nucleolus. Its subcellular location is the nucleus speckle. It is found in the cajal body. It localises to the gem. Its function is as follows. Ribosome-binding protein that promotes ribosome hibernation, a process during which ribosomes are stabilized in an inactive state and preserved from proteasomal degradation. Acts via its association with EEF2/eEF2 factor at the A-site of the ribosome, promoting ribosome stabilization in an inactive state compatible with storage. Plays a key role in ribosome hibernation in the mature oocyte by promoting ribosome stabilization. Ribosomes, which are produced in large quantities during oogenesis, are stored and translationally repressed in the oocyte and early embryo. Also binds RNA, regulating transcription and pre-mRNA splicing. Binds (via C-terminus) to poly(U) RNA. Seems to play a role in PML-nuclear bodies formation. Negatively regulates DNA-binding activity of the transcription factor MEF2C in myocardial cells in response to mechanical stress. The sequence is that of Intracellular hyaluronan-binding protein 4 from Mus musculus (Mouse).